We begin with the raw amino-acid sequence, 411 residues long: Lysosome-associated membrane glycoprotein 2 (411 aa).

An N-terminal signal peptide occupies residues 1 to 26; sequence MRLLSPVTGSKLVLLFLFLGAVRSDA. Residues 27-188 form a first lumenal domain region; sequence LKLNLTDSKG…SKHEQVCKED (162 aa). Over 27–376 the chain is Lumenal; that stretch reads LKLNLTDSKG…QDCSADEDNF (350 aa). A disulfide bridge connects residues Cys38 and Cys75. Asn46, Asn57, Asn71, Asn97, Asn109, Asn117, Asn175, Asn223, Asn230, Asn243, Asn261, Asn276, Asn308, Asn318, and Asn357 each carry an N-linked (GlcNAc...) asparagine glycan. A disulfide bridge links Cys149 with Cys185. A hinge region spans residues 189–229; sequence KTATTVAPIIHTTVPSPTTTLTPTSIPVPTPTVGNYTISNG. The second lumenal domain stretch occupies residues 230-376; that stretch reads NATCLLATMG…QDCSADEDNF (147 aa). An intrachain disulfide couples Cys233 to Cys266. Residues Cys332 and Cys369 are joined by a disulfide bond. Residues 377–400 form a helical membrane-spanning segment; it reads LVPIAVGAALGGVLILVLLAYFIG. The Cytoplasmic portion of the chain corresponds to 401 to 411; it reads LKRHHTGYEQF. The important for binding and subsequent lysosomal degradation of target proteins stretch occupies residues 402-405; it reads KRHH.

This sequence belongs to the LAMP family. Monomer. Forms large homooligomers. Interacts (via its cytoplasmic region) with HSPA8; HSPA8 mediates recruitment of proteins with a KFERQ motif to the surface of the lysosome for chaperone-mediated autophagy. Interacts with HSP90 in the lysosome lumen; this enhances LAMP2 stability. Interacts with MLLT11. Interacts with ABCB9. Interacts with FURIN. Interacts with CT55; this interaction may be important for LAMP2 protein stability. Interacts with TMEM175; inhibiting the proton channel activity of TMEM175. Forms a ternary complex with RAB7A and RUFY4 (via RUN domain); the interaction with RAB7A is mediated by RUFY4 (via RUN and coiled coil domains). Extensively N-glycosylated. Contains a minor proportion of O-linked glycans. Contains sialylated glycans. In terms of tissue distribution, detected in liver, kidney, spleen and macrophages (at protein level).

It is found in the lysosome membrane. The protein localises to the endosome membrane. It localises to the cell membrane. The protein resides in the cytoplasmic vesicle. Its subcellular location is the autophagosome membrane. Its function is as follows. Lysosomal membrane glycoprotein which plays an important role in lysosome biogenesis, lysosomal pH regulation and autophagy. Acts as an important regulator of lysosomal lumen pH regulation by acting as a direct inhibitor of the proton channel TMEM175, facilitating lysosomal acidification for optimal hydrolase activity. Plays an important role in chaperone-mediated autophagy, a process that mediates lysosomal degradation of proteins in response to various stresses and as part of the normal turnover of proteins with a long biological half-live. Functions by binding target proteins, such as GAPDH, NLRP3 and MLLT11, and targeting them for lysosomal degradation. In the chaperone-mediated autophagy, acts downstream of chaperones, such as HSPA8/HSC70, which recognize and bind substrate proteins and mediate their recruitment to lysosomes, where target proteins bind LAMP2. Plays a role in lysosomal protein degradation in response to starvation. Required for the fusion of autophagosomes with lysosomes during autophagy. Cells that lack LAMP2 express normal levels of VAMP8, but fail to accumulate STX17 on autophagosomes, which is the most likely explanation for the lack of fusion between autophagosomes and lysosomes. Required for normal degradation of the contents of autophagosomes. Required for efficient MHC class II-mediated presentation of exogenous antigens via its function in lysosomal protein degradation; antigenic peptides generated by proteases in the endosomal/lysosomal compartment are captured by nascent MHC II subunits. Is not required for efficient MHC class II-mediated presentation of endogenous antigens. This is Lysosome-associated membrane glycoprotein 2 (Lamp2) from Rattus norvegicus (Rat).